A 448-amino-acid chain; its full sequence is Vitamin D3 receptor (448 aa).

The nuclear receptor DNA-binding region spans 41–116; sequence PRICGVCGDR…IGMMKEFILT (76 aa). The Zn(2+) site is built by C44, C47, C61, C64, C80, C86, C96, and C99. NR C4-type zinc fingers lie at residues 44-64 and 80-104; these read CGVC…CEGC and CPFS…LKRC. A hinge region spans residues 117–146; sequence DEEVQRKREMILKRKEEEALKESLKPKLSE. The 298-residue stretch at 147–444 folds into the NR LBD domain; the sequence is EQQKVINILL…LTPLVLEVFG (298 aa). S258 contacts calcitriol. Positions 267-285 are interaction with coactivator LXXLL motif; that stretch reads KMIPGFRDLTAEDQIALLK. Positions 295, 299, 326, and 418 each coordinate calcitriol. The 9aaTAD signature appears at 437–445; that stretch reads PLVLEVFGN.

It belongs to the nuclear hormone receptor family. NR1 subfamily. In terms of assembly, homodimer in the absence of bound vitamin D3. Heterodimer with RXRA after vitamin D3 binding.

The protein resides in the nucleus. It is found in the cytoplasm. Functionally, nuclear receptor for calcitriol, the active form of vitamin D3 which mediates the action of this vitamin on cells. Enters the nucleus upon vitamin D3 binding where it forms heterodimers with the retinoid X receptor/RXR. The VDR-RXR heterodimers bind to specific response elements on DNA and activate the transcription of vitamin D3-responsive target genes. Plays a central role in calcium homeostasis. Also functions as a receptor for the secondary bile acid lithocholic acid (LCA) and its metabolites. In Coturnix japonica (Japanese quail), this protein is Vitamin D3 receptor (VDR).